Consider the following 411-residue polypeptide: Glutamyl-tRNA reductase (411 aa).

Residues 48–51 (TCNR), Ser106, 111–113 (EDQ), and Gln117 contribute to the substrate site. Residue Cys49 is the Nucleophile of the active site. 186-191 (GAGDMG) contributes to the NADP(+) binding site.

Belongs to the glutamyl-tRNA reductase family. Homodimer.

The catalysed reaction is (S)-4-amino-5-oxopentanoate + tRNA(Glu) + NADP(+) = L-glutamyl-tRNA(Glu) + NADPH + H(+). It functions in the pathway porphyrin-containing compound metabolism; protoporphyrin-IX biosynthesis; 5-aminolevulinate from L-glutamyl-tRNA(Glu): step 1/2. Functionally, catalyzes the NADPH-dependent reduction of glutamyl-tRNA(Glu) to glutamate 1-semialdehyde (GSA). This Clostridium novyi (strain NT) protein is Glutamyl-tRNA reductase.